A 203-amino-acid polypeptide reads, in one-letter code: MATETAGAVVESSSAATVPSPAPEAGSKHKLERKWTFWFDNQSKPKQGAAWGTSLREVYTFDTVEEFWCLYDQVFKPSKLPGNADFHLFKTGIEPKWEDPECAKGGKWTVTSNRKANLDNMWLETMMALIGEQFDDAEDICGVVASVRQRQDKLSLWTKTAANEAAQMGIGRKWKEIIDVTDKIIYNFHDDSRTRSSKSRYSV.

Low complexity predominate over residues 1–25 (MATETAGAVVESSSAATVPSPAPEA). The interval 1 to 27 (MATETAGAVVESSSAATVPSPAPEAGS) is disordered. MRNA contacts are provided by residues 47–52 (QGAAWG), Lys79, and 97–98 (WE). Cysteines 102 and 141 form a disulfide. 148 to 153 (RQRQDK) lines the mRNA pocket.

This sequence belongs to the eukaryotic initiation factor 4E family. As to quaternary structure, EIF4F is a multi-subunit complex, the composition of which varies with external and internal environmental conditions. It is composed of at least EIF4A, EIF4E and EIF4G. EIF4E is also known to interact with other partners. In higher plants two isoforms of EIF4F have been identified, named isoform EIF4F and isoform EIF(iso)4F. Isoform EIF4F has subunits p220 and p26, whereas isoform EIF(iso)4F has subunits p82 and p28. (Microbial infection) Interacts with the potyvirus peanut stripe virus (PStV) helper component proteinase (HC-Pro) in the cytoplasm and with PStV viral genome-linked protein (VPg) in the nucleus; these interactions are possible in susceptible hosts but impaired in resistant plants. According to the redox status, the Cys-102-Cys-141 disulfide bridge may have a role in regulating protein function by affecting its ability to bind capped mRNA. As to expression, expressed ubiquitously with highest levels in young leaves and roots, and lowest levels in flowers.

The protein resides in the cytoplasm. It localises to the nucleus. In terms of biological role, component of the protein complex eIF4F, which is involved in the recognition of the mRNA cap, ATP-dependent unwinding of 5'-terminal secondary structure and recruitment of mRNA to the ribosome. Recognizes and binds the 7-methylguanosine-containing mRNA cap during an early step in the initiation of protein synthesis and facilitates ribosome binding by inducing the unwinding of the mRNAs secondary structures. Key component of recessive resistance to potyviruses such as peanut stripe virus (PStV). Functionally, (Microbial infection) Susceptibility host factor required for viral infection by recruiting viral RNAs to the host ribosomal complex via an interaction with viral genome-linked protein (VPg). In Arachis hypogaea (Peanut), this protein is Eukaryotic translation initiation factor isoform 4E.